The sequence spans 342 residues: Glucokinase (342 aa).

18-23 (GDIGGT) is an ATP binding site.

It belongs to the bacterial glucokinase family.

The protein resides in the cytoplasm. It catalyses the reaction D-glucose + ATP = D-glucose 6-phosphate + ADP + H(+). The protein is Glucokinase of Chelativorans sp. (strain BNC1).